A 334-amino-acid chain; its full sequence is Formamidase (334 aa).

The CN hydrolase domain occupies 14 to 260; sequence FLVAAIQFPV…WEIVTGEIYP (247 aa). The active-site Proton acceptor is Glu60. Lys133 acts as the Proton donor in catalysis. Cys166 functions as the Nucleophile in the catalytic mechanism.

Belongs to the carbon-nitrogen hydrolase superfamily. Aliphatic amidase family.

The enzyme catalyses formamide + H2O = formate + NH4(+). Functionally, is an aliphatic amidase with a restricted substrate specificity, as it only hydrolyzes formamide. In Helicobacter pylori (strain P12), this protein is Formamidase.